A 150-amino-acid polypeptide reads, in one-letter code: Myeloid-derived growth factor homolog (150 aa).

The signal sequence occupies residues 1-22 (MTFLKYLLILCTIFLMVTNSLS).

Belongs to the MYDGF family.

The protein localises to the secreted. The polypeptide is Myeloid-derived growth factor homolog (Dictyostelium discoideum (Social amoeba)).